The primary structure comprises 327 residues: Phosphate acyltransferase (327 aa).

It belongs to the PlsX family. Homodimer. Probably interacts with PlsY.

The protein localises to the cytoplasm. It carries out the reaction a fatty acyl-[ACP] + phosphate = an acyl phosphate + holo-[ACP]. It functions in the pathway lipid metabolism; phospholipid metabolism. In terms of biological role, catalyzes the reversible formation of acyl-phosphate (acyl-PO(4)) from acyl-[acyl-carrier-protein] (acyl-ACP). This enzyme utilizes acyl-ACP as fatty acyl donor, but not acyl-CoA. The chain is Phosphate acyltransferase from Thermotoga neapolitana (strain ATCC 49049 / DSM 4359 / NBRC 107923 / NS-E).